The chain runs to 416 residues: uncharacterized protein (416 aa).

Helical transmembrane passes span 5–25, 84–104, 128–148, 160–180, 192–212, 237–257, 263–283, 288–308, and 312–332; these read LFLISLVSFVFFIFGNWILSL, ISGLSAFGTTLLIYFITLKHV, AYVPEFTLVFFSTLGVYLFSI, LAFLTKGPVGVILPIGIYLLW, VLLFILIGFSWYFLMIYKFGF, PIYFYPLVILVSSILFLPVFL, FDKRLLPFAGWFLLVLVFYSL, LHHYILFSYPALSVIIGFYLT, and IKYAYIVGSFLLLILMFGVYI.

This sequence belongs to the glycosyltransferase 83 family.

It localises to the cell membrane. This is an uncharacterized protein from Aquifex aeolicus (strain VF5).